Reading from the N-terminus, the 136-residue chain is Small ribosomal subunit protein uS12 (136 aa).

The segment at 1-28 is disordered; sequence MPTIQQLIRSERQELKKKTKSPALKSCP. Asp-89 is modified (3-methylthioaspartic acid). The segment at 101-136 is disordered; it reads TLDTAGVKDRKQGRSKYGAKRPKPGAASTASTGKKR. Positions 113-123 are enriched in basic residues; that stretch reads GRSKYGAKRPK.

The protein belongs to the universal ribosomal protein uS12 family. As to quaternary structure, part of the 30S ribosomal subunit. Contacts proteins S8 and S17. May interact with IF1 in the 30S initiation complex.

Functionally, with S4 and S5 plays an important role in translational accuracy. Interacts with and stabilizes bases of the 16S rRNA that are involved in tRNA selection in the A site and with the mRNA backbone. Located at the interface of the 30S and 50S subunits, it traverses the body of the 30S subunit contacting proteins on the other side and probably holding the rRNA structure together. The combined cluster of proteins S8, S12 and S17 appears to hold together the shoulder and platform of the 30S subunit. The polypeptide is Small ribosomal subunit protein uS12 (Cyanothece sp. (strain PCC 7425 / ATCC 29141)).